The sequence spans 100 residues: MAKKSLIQREKKRQELKQKYHSIRLYLKKRMSEASLLDEKWEISEKLQSLPRNSAPTRLHRRCLLTGRSRANYRDFGLSRHVLREMAHACLLPGVIKSSW.

It belongs to the universal ribosomal protein uS14 family. As to quaternary structure, part of the 30S ribosomal subunit.

The protein localises to the plastid. It is found in the chloroplast. Its function is as follows. Binds 16S rRNA, required for the assembly of 30S particles. In Huperzia lucidula (Shining clubmoss), this protein is Small ribosomal subunit protein uS14c.